Consider the following 190-residue polypeptide: Frataxin homolog, mitochondrial (190 aa).

The protein belongs to the frataxin family. In terms of assembly, monomer (probable predominant form). Oligomer. Interacts with IscU. Component of the mitochondrial core iron-sulfur cluster (ISC) assembly complex at least composed of the cysteine desulfurase Nfs1, the scaffold protein IscU, the accessory protein bcn92/Isd11/Lyrm4, and probably fh/frataxin.

The protein resides in the mitochondrion. It carries out the reaction 4 Fe(2+) + O2 + 4 H(+) = 4 Fe(3+) + 2 H2O. Its function is as follows. Promotes the biosynthesis of heme as well as the assembly and repair of iron-sulfur clusters by delivering Fe(2+) to proteins involved in these pathways. May play a role in the protection against iron-catalyzed oxidative stress through its ability to catalyze the oxidation of Fe(2+) to Fe(3+). May be able to store large amounts of the metal in the form of a ferrihydrite mineral by oligomerization. Required for ecdysteroidogenesis in the prothoracic gland which is necessary for larval to pupal transition. In Drosophila melanogaster (Fruit fly), this protein is Frataxin homolog, mitochondrial.